The sequence spans 141 residues: Small ribosomal subunit protein bS16 (141 aa).

The tract at residues 84–141 (TRKARSNPEKSKPKAKAQERLEAARMAEEEAAAAAKAAAEAPAEEAPAAEAPAEEAQA) is disordered. The span at 89–111 (SNPEKSKPKAKAQERLEAARMAE) shows a compositional bias: basic and acidic residues. Residues 115–141 (AAAAKAAAEAPAEEAPAAEAPAEEAQA) are compositionally biased toward low complexity.

Belongs to the bacterial ribosomal protein bS16 family.

The sequence is that of Small ribosomal subunit protein bS16 from Parvibaculum lavamentivorans (strain DS-1 / DSM 13023 / NCIMB 13966).